The following is a 463-amino-acid chain: Glycine--tRNA ligase (463 aa).

The substrate site is built by Arg-98 and Glu-174. ATP contacts are provided by residues 206-208, 216-221, 290-291, and 334-337; these read RNE, FRTREF, EL, and GADR. Residue 221-225 participates in substrate binding; that stretch reads FEQME. 330-334 contacts substrate; the sequence is EPSLG.

It belongs to the class-II aminoacyl-tRNA synthetase family. Homodimer.

The protein localises to the cytoplasm. It carries out the reaction tRNA(Gly) + glycine + ATP = glycyl-tRNA(Gly) + AMP + diphosphate. In terms of biological role, catalyzes the attachment of glycine to tRNA(Gly). This is Glycine--tRNA ligase from Staphylococcus aureus (strain bovine RF122 / ET3-1).